Here is a 560-residue protein sequence, read N- to C-terminus: Putative transport protein PBPRA2420 (560 aa).

A run of 5 helical transmembrane segments spans residues 5–25 (VASLLHQNDILLLFVVLAVGL), 37–57 (VGNSIGVLLTAILFGNAGFTF), 66–86 (FMLFIFCVGIEAGPNFFGIFF), 91–111 (HYLLLALVVLLSAIAITLAMT), and 161–181 (SLSVGYAMSYLMGLISLIFLA). 2 RCK C-terminal domains span residues 203–292 (RGIG…FRNG) and 293–377 (KEVF…IGFI). A run of 6 helical transmembrane segments spans residues 386–406 (LLAFCCFFIIGLLIGSITLAF), 409–429 (VAFGLGSAAGLLIAGITLGFL), 452–472 (LMVFMVGIGLSAGSNLFDSFA), 477–497 (MVLVTSLMVSVIPVVLAYLFG), 506–526 (ALLFGAIIGARTCAPAMDMIN), and 539–559 (AGTYAIANVLLTIAGTLIIIM).

The protein belongs to the AAE transporter (TC 2.A.81) family. YbjL subfamily.

The protein localises to the cell membrane. The chain is Putative transport protein PBPRA2420 from Photobacterium profundum (strain SS9).